A 373-amino-acid chain; its full sequence is Transcription factor SPATULA (373 aa).

Residues 1 to 21 (MISQREEREEKKQRVMGDKKL) are compositionally biased toward basic and acidic residues. Disordered regions lie at residues 1-46 (MISQ…PSSS) and 141-210 (VQGN…KRRR). A compositionally biased stretch (low complexity) spans 141-160 (VQGNSSGTRVSSSSVGASGN). Positions 161 to 177 (ETDEYDCESEEGGEAVV) are enriched in acidic residues. Residues 182-191 (SSKSGPSSRS) show a composition bias toward low complexity. Positions 197-210 (RAAEVHNLSEKRRR) are enriched in basic and acidic residues. One can recognise a bHLH domain in the interval 197–246 (RAAEVHNLSEKRRRSRINEKMKALQSLIPNSNKTDKASMLDEAIEYLKQL).

Homodimer. Interacts with HEC1, HEC2 and HEC3. Binds to RGL2 and RGA. As to expression, expressed in lateral root caps, young leaves, stipules, maturing pith cells of the stem, differentiating vascular cells, shoot apical meristems and flowers.

Its subcellular location is the nucleus. Functionally, transcription factor that plays a role in floral organogenesis. Promotes the growth of carpel margins and of pollen tract tissues derived from them. The chain is Transcription factor SPATULA (SPT) from Arabidopsis thaliana (Mouse-ear cress).